Here is a 358-residue protein sequence, read N- to C-terminus: 3-dehydroquinate synthase (358 aa).

Residues 104-108, 128-129, lysine 140, lysine 149, and 167-170 contribute to the NAD(+) site; these read GVIGD, TT, and FLNT. Zn(2+) contacts are provided by glutamate 182, histidine 246, and histidine 260.

This sequence belongs to the sugar phosphate cyclases superfamily. Dehydroquinate synthase family. Co(2+) serves as cofactor. It depends on Zn(2+) as a cofactor. NAD(+) is required as a cofactor.

It is found in the cytoplasm. The catalysed reaction is 7-phospho-2-dehydro-3-deoxy-D-arabino-heptonate = 3-dehydroquinate + phosphate. Its pathway is metabolic intermediate biosynthesis; chorismate biosynthesis; chorismate from D-erythrose 4-phosphate and phosphoenolpyruvate: step 2/7. Catalyzes the conversion of 3-deoxy-D-arabino-heptulosonate 7-phosphate (DAHP) to dehydroquinate (DHQ). The chain is 3-dehydroquinate synthase from Staphylococcus carnosus (strain TM300).